Reading from the N-terminus, the 368-residue chain is MNPKSSTPKIPRPKNAFILFRQHYHRILIDEWTAQGVEIPHNSNISKIIGTKWKGLQPEDKAHWENLAEKEKLEHERKYPEYKYKPVRKSKKKQLLLKEIEQQQQQQQKEQQQQKQSQPQLQQPFNNNIVLMKRAHSLSPSSSVSSSNSYQFQLNNDLKRLPIPSVNTSNYMVSRSLSGLPLTHDKTARDLPQLSSQLNSIPYYSAPHDPSTRHHYLNVAQAQPRANSTPQLPFISSIINNSSQTPVTTTTTSTTTATSSPGKFSSSPNSSVLENNRLNSINNSNQYLPPPLLPSLQDFQLDQYQQLKQMGPTYIVKPLSHTRNNLLSTTTPTHHHIPHIPNQNIPLHQIINSSNTEVTAKTSLVSPK.

The segment at residues 10–83 (IPRPKNAFIL…EHERKYPEYK (74 aa)) is a DNA-binding region (HMG box). 2 disordered regions span residues 100-121 (IEQQQQQQQKEQQQQKQSQPQL) and 242-273 (SSQTPVTTTTTSTTTATSSPGKFSSSPNSSVL). Over residues 102 to 121 (QQQQQQQKEQQQQKQSQPQL) the composition is skewed to low complexity.

The protein resides in the nucleus. Its function is as follows. Transcription factor that represses the expression of HEM13, COX5B, ANB1, CYC7 or AAC3 (hypoxic function). Binds to the DNA sequence 5'-RRRTAACAAGAG-3'. This Saccharomyces cerevisiae (strain ATCC 204508 / S288c) (Baker's yeast) protein is Repressor ROX1 (ROX1).